Reading from the N-terminus, the 147-residue chain is Small ribosomal subunit protein bS6 (147 aa).

The tract at residues 114–147 is disordered; sequence GKGTRAAEQAAAAEAAAPAAAPAEPASAEPAPAV. A compositionally biased stretch (low complexity) spans 119–147; that stretch reads AAEQAAAAEAAAPAAAPAEPASAEPAPAV.

The protein belongs to the bacterial ribosomal protein bS6 family.

Functionally, binds together with bS18 to 16S ribosomal RNA. The sequence is that of Small ribosomal subunit protein bS6 from Koribacter versatilis (strain Ellin345).